A 403-amino-acid polypeptide reads, in one-letter code: MEEPRCLQANCFFRGKEHSIQLSVSQAVLEVEVEERRSTKRWRGHFDAASVEDLTRKTGNFKQFGIFCSMLEAALMKSSEAVSLELLTYGDLEALRCCKVGVATRVPPSTSPLSSKRYLILVYCVEFDRIHYPLPLPYIGEADMAALRRLVQEQQDELAQLRDELRRAQQEVWRLEDERLRDKAWHQQEQRRMTKELTEVKAAEKMLRAHVKTLTAELAVCRKGRSTSATAPGCPQDRRRSNSRDSRSSSQGRLPPRSPSPAGSRPPRFNPTAFVRSREQRRQEAELRRQKLPRGTVSSGDNCRRRGRRSSSAESLQSRRSAQSSGSEADTCPQRRRGLGGPSTRSPLSASSCNSTSVASHPNRGCKQHGKENLGTEPSATLSEIDARLQALQAYISTLGTHM.

The interval 1 to 142 (MEEPRCLQAN…PLPLPYIGEA (142 aa)) is head domain. A coiled-coil region spans residues 144 to 178 (MAALRRLVQEQQDELAQLRDELRRAQQEVWRLEDE). The disordered stretch occupies residues 224-377 (GRSTSATAPG…QHGKENLGTE (154 aa)). Basic and acidic residues-rich tracts occupy residues 236 to 247 (QDRRRSNSRDSR) and 276 to 289 (RSREQRRQEAELRR). Composition is skewed to low complexity over residues 310 to 328 (SSSAESLQSRRSAQSSGSE) and 349 to 360 (SASSCNSTSVAS).

This sequence belongs to the CCDC61 family. As to quaternary structure, forms homodimers (via head domain).

It localises to the cytoplasm. It is found in the cytoskeleton. Its subcellular location is the microtubule organizing center. The protein localises to the centrosome. The protein resides in the centriolar satellite. It localises to the cilium basal body. Functionally, microtubule-binding centrosomal protein required for centriole cohesion, independently of the centrosome-associated protein/CEP250 and rootletin/CROCC linker. In interphase, required for anchoring microtubule at the mother centriole subdistal appendages and for centrosome positioning. During mitosis, may be involved in spindle assembly and chromatin alignment by regulating the organization of spindle microtubules into a symmetrical structure. Plays a non-essential role in ciliogenesis. The chain is Centrosomal protein CCDC61 (CCDC61) from Gallus gallus (Chicken).